We begin with the raw amino-acid sequence, 1512 residues long: Lysophospholipase NTE1 (1512 aa).

At 1–48 the chain is on the cytoplasmic side; the sequence is MAAPDAMTSLVKSSVALLSSAHESLPTSLAAMKTAETAPSSTFGILGR. Residues 49–69 form a helical membrane-spanning segment; that stretch reads VILSILSVLPTLLFWVSYTLP. At 70–83 the chain is on the lumenal side; it reads TWLFTLFSMSLTFT. Residues 84 to 104 traverse the membrane as a helical segment; sequence MNFTTLMLVLVFVVSTISYFV. The Cytoplasmic segment spans residues 105-1512; the sequence is RYRYLTMYAR…RTMAPRRASI (1408 aa). 4 disordered regions span residues 204 to 230, 262 to 362, 534 to 556, and 740 to 770; these read NREESDSDEDDGELQGESGGGSAQAHR, RHDE…AHPD, TQMSRGTGRSGRSSFSQPYQHDV, and TEDDLFGPPLQPTATNTSLRNGENSKKKRSR. Positions 208-217 are enriched in acidic residues; it reads SDSDEDDGEL. Polar residues predominate over residues 268 to 291; it reads GPSSSTPMSPQHRPSMTRNSSFNM. Residues 343-358 show a composition bias toward basic residues; the sequence is HSKQRRSPSRSTKPKS. Residues 537–549 are compositionally biased toward low complexity; it reads SRGTGRSGRSSFS. A nucleoside 3',5'-cyclic phosphate is bound by residues 669–793 and 830–950; these read LSAS…SNRS and RLTT…IASR. A compositionally biased stretch (polar residues) spans 751–761; the sequence is PTATNTSLRNG. Residues 1209–1373 form the PNPLA domain; the sequence is LVLGGGGARG…IDNLTVAHMK (165 aa). The GXGXXG motif lies at 1213–1218; the sequence is GGGARG. The short motif at 1240 to 1244 is the GXSXG element; that stretch reads GTSIG. The active-site Nucleophile is S1242. Catalysis depends on D1360, which acts as the Proton acceptor. The DGA/G signature appears at 1360-1362; that stretch reads DGG.

Belongs to the NTE family.

Its subcellular location is the endoplasmic reticulum membrane. It carries out the reaction a 1-acyl-sn-glycero-3-phosphocholine + H2O = sn-glycerol 3-phosphocholine + a fatty acid + H(+). Its activity is regulated as follows. Inhibited by organophosphorus esters. Its function is as follows. Intracellular phospholipase B that catalyzes the double deacylation of phosphatidylcholine (PC) to glycerophosphocholine (GroPCho). Plays an important role in membrane lipid homeostasis. Responsible for the rapid PC turnover in response to inositol, elevated temperatures, or when choline is present in the growth medium. The polypeptide is Lysophospholipase NTE1 (NTE1) (Phaeosphaeria nodorum (strain SN15 / ATCC MYA-4574 / FGSC 10173) (Glume blotch fungus)).